Consider the following 304-residue polypeptide: Aquaglyceroporin-3 (304 aa).

The Cytoplasmic segment spans residues 1 to 68 (MQSQPDNVAY…LRLNYRDYMG (68 aa)). Residues 69–89 (ELLGTFVLLFMGNGVVATVII) form a helical membrane-spanning segment. Over 90-95 (DGKLGF) the chain is Extracellular. A helical membrane pass occupies residues 96–116 (LSITLGWGIAVTMALYVSLGI). Residues 117 to 142 (SSGHLNPAVTVGNAVFGDFPWRKVPG) are Cytoplasmic-facing. A helical membrane pass occupies residues 143 to 163 (YIAAQMLGAFLGAACAYGVFA). Residues 164–196 (DLLKAHGGGELIAFGEKGTAGVFSTYPRDSNGL) lie on the Extracellular side of the membrane. A helical membrane pass occupies residues 197–217 (FSCIFGEFICTAMLLFCVCGI). Over 218-231 (FDPNNSPAKGHEPL) the chain is Cytoplasmic. A helical transmembrane segment spans residues 232–252 (AVGALVFAIGNNIGYSTGYAI). Over 253–277 (NPARDFGPRVFSSFLYGGEVFSHAN) the chain is Extracellular. The helical transmembrane segment at 278 to 298 (YYFWVPLVIPLFGGIFGLFLY) threads the bilayer. Residues 299-304 (KYFVPH) are Cytoplasmic-facing.

Belongs to the MIP/aquaporin (TC 1.A.8) family.

The protein resides in the cell membrane. The catalysed reaction is glycerol(in) = glycerol(out). The enzyme catalyses H2O(in) = H2O(out). It carries out the reaction urea(in) = urea(out). Functionally, mediates water and glycerol transport across the cell membrane. Permeable to urea. Permeable to methylamine/methylammonium. Permeable to dihydroxyacetone. Permeable to erythritol and ribitol. The protein is Aquaglyceroporin-3 of Trypanosoma brucei brucei.